A 286-amino-acid polypeptide reads, in one-letter code: Structural protein p32K (286 aa).

Positions 1–12 are cleaved as a propeptide — removed in mature form; it reads MYVTNNTALAGG. Positions 1–41 are disordered; it reads MYVTNNTALAGGAYRKRKKKFQRPKPRKRARKSKKPPKSEN. The segment covering 14–36 has biased composition (basic residues); that stretch reads YRKRKKKFQRPKPRKRARKSKKP.

It belongs to the atadenoviridae p32K protein family.

Its subcellular location is the virion. The polypeptide is Structural protein p32K (Ovine adenovirus D serotype 7 (isolate OAV287) (OAdV-7)).